Reading from the N-terminus, the 115-residue chain is T cell receptor beta variable 11-1 (115 aa).

A signal peptide spans 1–21 (MSTRLLCWMALCLLGAELSEA). Residues 22–115 (EVAQSPRYKI…SAMYLCASSL (94 aa)) enclose the Ig-like domain. A disulfide bridge links Cys42 with Cys111.

Alpha-beta TR is a heterodimer composed of an alpha and beta chain; disulfide-linked. The alpha-beta TR is associated with the transmembrane signaling CD3 coreceptor proteins to form the TR-CD3 (TcR or TCR). The assembly of alpha-beta TR heterodimers with CD3 occurs in the endoplasmic reticulum where a single alpha-beta TR heterodimer associates with one CD3D-CD3E heterodimer, one CD3G-CD3E heterodimer and one CD247 homodimer forming a stable octameric structure. CD3D-CD3E and CD3G-CD3E heterodimers preferentially associate with TR alpha and TR beta chains, respectively. The association of the CD247 homodimer is the last step of TcR assembly in the endoplasmic reticulum and is required for transport to the cell surface.

The protein resides in the cell membrane. In terms of biological role, v region of the variable domain of T cell receptor (TR) beta chain that participates in the antigen recognition. Alpha-beta T cell receptors are antigen specific receptors which are essential to the immune response and are present on the cell surface of T lymphocytes. Recognize peptide-major histocompatibility (MH) (pMH) complexes that are displayed by antigen presenting cells (APC), a prerequisite for efficient T cell adaptive immunity against pathogens. Binding of alpha-beta TR to pMH complex initiates TR-CD3 clustering on the cell surface and intracellular activation of LCK that phosphorylates the ITAM motifs of CD3G, CD3D, CD3E and CD247 enabling the recruitment of ZAP70. In turn ZAP70 phosphorylates LAT, which recruits numerous signaling molecules to form the LAT signalosome. The LAT signalosome propagates signal branching to three major signaling pathways, the calcium, the mitogen-activated protein kinase (MAPK) kinase and the nuclear factor NF-kappa-B (NF-kB) pathways, leading to the mobilization of transcription factors that are critical for gene expression and essential for T cell growth and differentiation. The T cell repertoire is generated in the thymus, by V-(D)-J rearrangement. This repertoire is then shaped by intrathymic selection events to generate a peripheral T cell pool of self-MH restricted, non-autoaggressive T cells. Post-thymic interaction of alpha-beta TR with the pMH complexes shapes TR structural and functional avidity. This chain is T cell receptor beta variable 11-1, found in Homo sapiens (Human).